A 265-amino-acid polypeptide reads, in one-letter code: Probable enoyl-CoA hydratase 1, peroxisomal (265 aa).

Methionine 1 carries the N-acetylmethionine modification. Residues 68-72 and alanine 112 contribute to the substrate site; that span reads SGVDL. Positions 263-265 match the Microbody targeting signal motif; it reads SKL.

This sequence belongs to the enoyl-CoA hydratase/isomerase family.

The protein localises to the peroxisome. It catalyses the reaction a (3S)-3-hydroxyacyl-CoA = a (2E)-enoyl-CoA + H2O. It carries out the reaction a 4-saturated-(3S)-3-hydroxyacyl-CoA = a (3E)-enoyl-CoA + H2O. It participates in lipid metabolism; fatty acid beta-oxidation. Its function is as follows. Straight-chain enoyl-CoA thioesters from C4 up to at least C16 are processed, although with decreasing catalytic rate. This Arabidopsis thaliana (Mouse-ear cress) protein is Probable enoyl-CoA hydratase 1, peroxisomal.